Consider the following 234-residue polypeptide: Rhodanese-like domain-containing protein 9, chloroplastic (234 aa).

Residues 1–47 (MAGIISPSPTALYFTSNVGGRRLKAVSWAGKSVSGNVIRRRSLRIAA) constitute a chloroplast transit peptide. The region spanning 62–185 (AEEGYSVVDV…VKPGTFESVG (124 aa)) is the Rhodanese domain. The active-site Cysteine persulfide intermediate is the Cys145. The chain crosses the membrane as a helical span at residues 204 to 222 (ISAVLGTVLVCAYLFIQFF).

The protein localises to the plastid. It localises to the chloroplast. It is found in the membrane. The chain is Rhodanese-like domain-containing protein 9, chloroplastic (STR9) from Arabidopsis thaliana (Mouse-ear cress).